Reading from the N-terminus, the 363-residue chain is Chorismate synthase (363 aa).

Residues 42-61 (QRDLDRRKPGTSRHTTQRQE) form a disordered region. Arg48 and Arg54 together coordinate NADP(+). FMN-binding positions include 125 to 127 (RSS), 237 to 238 (NA), Gly277, 292 to 296 (KPTSS), and Arg318.

This sequence belongs to the chorismate synthase family. Homotetramer. The cofactor is FMNH2.

The catalysed reaction is 5-O-(1-carboxyvinyl)-3-phosphoshikimate = chorismate + phosphate. It participates in metabolic intermediate biosynthesis; chorismate biosynthesis; chorismate from D-erythrose 4-phosphate and phosphoenolpyruvate: step 7/7. In terms of biological role, catalyzes the anti-1,4-elimination of the C-3 phosphate and the C-6 proR hydrogen from 5-enolpyruvylshikimate-3-phosphate (EPSP) to yield chorismate, which is the branch point compound that serves as the starting substrate for the three terminal pathways of aromatic amino acid biosynthesis. This reaction introduces a second double bond into the aromatic ring system. The protein is Chorismate synthase of Pseudomonas aeruginosa (strain LESB58).